The chain runs to 146 residues: Coactosin (146 aa).

Residues 1-132 (MADVSSTELK…NEEELMTKVR (132 aa)) enclose the ADF-H domain.

The protein belongs to the actin-binding proteins ADF family. Coactosin subfamily. The N-terminus is blocked.

The protein localises to the cytoplasm. It is found in the cytoskeleton. In terms of biological role, binds to F-actin in a calcium independent manner. Binds to the filaments along their length. This Dictyostelium discoideum (Social amoeba) protein is Coactosin (coaA).